Consider the following 220-residue polypeptide: Deoxyribose-phosphate aldolase (220 aa).

Aspartate 89 serves as the catalytic Proton donor/acceptor. Catalysis depends on lysine 151, which acts as the Schiff-base intermediate with acetaldehyde. Lysine 180 acts as the Proton donor/acceptor in catalysis.

This sequence belongs to the DeoC/FbaB aldolase family. DeoC type 1 subfamily.

It is found in the cytoplasm. It carries out the reaction 2-deoxy-D-ribose 5-phosphate = D-glyceraldehyde 3-phosphate + acetaldehyde. Its pathway is carbohydrate degradation; 2-deoxy-D-ribose 1-phosphate degradation; D-glyceraldehyde 3-phosphate and acetaldehyde from 2-deoxy-alpha-D-ribose 1-phosphate: step 2/2. Functionally, catalyzes a reversible aldol reaction between acetaldehyde and D-glyceraldehyde 3-phosphate to generate 2-deoxy-D-ribose 5-phosphate. The polypeptide is Deoxyribose-phosphate aldolase (Streptococcus equi subsp. equi (strain 4047)).